A 256-amino-acid chain; its full sequence is Ubiquinone/menaquinone biosynthesis C-methyltransferase UbiE (256 aa).

Residues Thr-79, Asp-100, and 128 to 129 (DA) contribute to the S-adenosyl-L-methionine site.

It belongs to the class I-like SAM-binding methyltransferase superfamily. MenG/UbiE family.

The enzyme catalyses a 2-demethylmenaquinol + S-adenosyl-L-methionine = a menaquinol + S-adenosyl-L-homocysteine + H(+). The catalysed reaction is a 2-methoxy-6-(all-trans-polyprenyl)benzene-1,4-diol + S-adenosyl-L-methionine = a 5-methoxy-2-methyl-3-(all-trans-polyprenyl)benzene-1,4-diol + S-adenosyl-L-homocysteine + H(+). Its pathway is quinol/quinone metabolism; menaquinone biosynthesis; menaquinol from 1,4-dihydroxy-2-naphthoate: step 2/2. It participates in cofactor biosynthesis; ubiquinone biosynthesis. In terms of biological role, methyltransferase required for the conversion of demethylmenaquinol (DMKH2) to menaquinol (MKH2) and the conversion of 2-polyprenyl-6-methoxy-1,4-benzoquinol (DDMQH2) to 2-polyprenyl-3-methyl-6-methoxy-1,4-benzoquinol (DMQH2). The polypeptide is Ubiquinone/menaquinone biosynthesis C-methyltransferase UbiE (Pseudomonas fluorescens (strain SBW25)).